Consider the following 778-residue polypeptide: Ent-sandaracopimaradiene synthase KSL3, chloroplastic (778 aa).

The N-terminal 35 residues, 1–35 (MLLTSTNTLKISSQRKEWEAKDLTGMFHGQVNGRV), are a transit peptide targeting the chloroplast. Positions 527, 531, 670, 671, and 678 each coordinate Mg(2+). The short motif at 527–531 (DDFFE) is the DDXXD motif element.

Belongs to the terpene synthase family. It depends on Mg(2+) as a cofactor.

The protein resides in the plastid. The protein localises to the chloroplast. It catalyses the reaction ent-copalyl diphosphate = ent-sandaracopimara-8(14),15-diene + diphosphate. It carries out the reaction ent-copalyl diphosphate = ent-(12E)-labda-8(17),12,14-triene + diphosphate. Its pathway is secondary metabolite biosynthesis; terpenoid biosynthesis. Its function is as follows. Diterpene cyclase involved in the biosynthesis of labdane-related diterpenoids (LRDs) natural products. Catalyzes the cyclization of ent-CDP into ent-sandaracopimaradiene as a major, and ent-pimaradiene and ent-labdatriene as minor products. The protein is Ent-sandaracopimaradiene synthase KSL3, chloroplastic of Ricinus communis (Castor bean).